Here is a 251-residue protein sequence, read N- to C-terminus: uncharacterized protein (251 aa).

Helical transmembrane passes span 56 to 76 (LAVV…TLVA), 104 to 124 (IITV…FLLT), 184 to 204 (HGFV…LIIV), and 208 to 228 (YLIA…ANIS).

It is found in the membrane. This is an uncharacterized protein from Caenorhabditis elegans.